Here is a 1158-residue protein sequence, read N- to C-terminus: MGLKIIYGRAGTGKSTFCINQIKKKINNSPTNKLILIVPEQFTFQTENKVLNAIGERYVLNAEVLSFKRLAHNVFNECGGATRTIMGDAGKSMLIFKVLEDLGDNMTVFKNASRQKGFIDIASKTITEFKKYNVNNEVLDLTINEIEDENLKMKMEELKDVFNEFNSRLHEGYVDEEDQLLLLNEKLDGCSLYDGAEIWIDEFSSFTPNQLSVIGKLLKRAKSVNITLSIDEVNSPKGESDLFVATKNTEKRLMNLIQEEGIAFNGYINLNEDISYRFKENKELAHIERQLYAYPFKQYRGKNNSLRLYRANNNYDEIEFVAKDILRLVREKQYRFKDISVICRDVDNYEKVVSAIFAEYEIPYYIDKKIDIASNPLIVFINSAVDIISKNWTYESMFKYLKTGLIKEFRGIEGAELIDELENYVLAYGIKGKKWMEEWVNYSSSILKEEEISEEDKQRLERLNDIRENIVTPLDEFNKQCKGKKTLKEFATILYEFLDSKLDVMDTIDKYVDYFKENDMAIEAKEYYEVRDIFIDVLEQAVDVLGNEVMDLNEFMKVLNIGLSQYEMGLIPVALDQVNIGDITRIKSRGTKALYIIGVNDGVLPSASKEEGILSDNDREILLEKGISLASDTRTKIFEEQFLVYTAFTIAEEYLVVTYPLADFEGKSQRPSIIVHRLKKILPNVKEESEGFKLVDDKYEKISAKLPTLNELMIAIRKNYDGAEIEDYWKYVYDWYLREPKWKERIEYVRKGLEYTNLENNISKEKAKKLYEDNKNKISLSVSRLERYAQCPFAYYIQYGLKAKDRKIYEFTAPDLGSFMHEILDEFTNEIKEKDLKWSDLSKENCRNIINSLVDNQVKNNKSSILNSSKRYSYFTDRFKRILTKSVMVISEQMKRSDFEIYKNELAFGFSKDVNSIKLDLPSGESFYLNGRIDRVDKLNLDGETYLRIIDYKTGSKKFDLNKFYNGLQMQLLVYLDALINNSENIVENQAMPGAILYFRIDDPILKSKGDLTEEEIKSEVLKELKLEGLLLDDVKVVKAMDNTLEPGTHSLIIPANMKKAGDLGKNKALITMEQFELLRKYVNEKMVEICQNMIEGKIDIEPCKENKNIVCDYCNYSHICQFDSSLEDNRYKVIPKKKDEDIWKSINEKVGGEVNGD.

8–15 is a binding site for ATP; that stretch reads GRAGTGKS. [4Fe-4S] cluster-binding residues include Cys791, Cys1112, Cys1115, and Cys1121.

This sequence belongs to the helicase family. AddB/RexB type 1 subfamily. In terms of assembly, heterodimer of AddA and AddB. The cofactor is Mg(2+). It depends on [4Fe-4S] cluster as a cofactor.

In terms of biological role, the heterodimer acts as both an ATP-dependent DNA helicase and an ATP-dependent, dual-direction single-stranded exonuclease. Recognizes the chi site generating a DNA molecule suitable for the initiation of homologous recombination. The AddB subunit has 5' -&gt; 3' nuclease activity but not helicase activity. This chain is ATP-dependent helicase/deoxyribonuclease subunit B, found in Clostridium perfringens (strain ATCC 13124 / DSM 756 / JCM 1290 / NCIMB 6125 / NCTC 8237 / Type A).